The primary structure comprises 264 residues: Thymidylate synthase (264 aa).

Arg-21 is a dUMP binding site. His-51 is a (6R)-5,10-methylene-5,6,7,8-tetrahydrofolate binding site. 126–127 contributes to the dUMP binding site; sequence RR. Residue Cys-146 is the Nucleophile of the active site. DUMP contacts are provided by residues 166–169, Asn-177, and 207–209; these read RSAD and HLY. Asp-169 is a (6R)-5,10-methylene-5,6,7,8-tetrahydrofolate binding site. A (6R)-5,10-methylene-5,6,7,8-tetrahydrofolate-binding site is contributed by Ala-263.

It belongs to the thymidylate synthase family. Bacterial-type ThyA subfamily. As to quaternary structure, homodimer.

It localises to the cytoplasm. It carries out the reaction dUMP + (6R)-5,10-methylene-5,6,7,8-tetrahydrofolate = 7,8-dihydrofolate + dTMP. It functions in the pathway pyrimidine metabolism; dTTP biosynthesis. Catalyzes the reductive methylation of 2'-deoxyuridine-5'-monophosphate (dUMP) to 2'-deoxythymidine-5'-monophosphate (dTMP) while utilizing 5,10-methylenetetrahydrofolate (mTHF) as the methyl donor and reductant in the reaction, yielding dihydrofolate (DHF) as a by-product. This enzymatic reaction provides an intracellular de novo source of dTMP, an essential precursor for DNA biosynthesis. This is Thymidylate synthase from Legionella pneumophila (strain Paris).